Reading from the N-terminus, the 305-residue chain is Ribonuclease BN (305 aa).

Residues histidine 64, histidine 66, aspartate 68, histidine 69, histidine 141, aspartate 212, and histidine 270 each contribute to the Zn(2+) site. Aspartate 68 (proton acceptor) is an active-site residue.

The protein belongs to the RNase Z family. RNase BN subfamily. In terms of assembly, homodimer. Zn(2+) serves as cofactor.

Zinc phosphodiesterase, which has both exoribonuclease and endoribonuclease activities. This Citrobacter koseri (strain ATCC BAA-895 / CDC 4225-83 / SGSC4696) protein is Ribonuclease BN.